The sequence spans 138 residues: Putative esterase HI_1161 (138 aa).

The protein belongs to the thioesterase PaaI family.

This is Putative esterase HI_1161 from Haemophilus influenzae (strain ATCC 51907 / DSM 11121 / KW20 / Rd).